The chain runs to 146 residues: Protein LDOC1 (146 aa).

This sequence belongs to the LDOC1 family. In terms of assembly, interacts with NOD2. As to expression, ubiquitously expressed with high levels in brain ant thyroid and low expression in placenta, liver and leukocytes. Expressed as well in six of the seven human breast cancer cell lines examined.

The protein resides in the nucleus. In terms of biological role, may have an important role in the development and/or progression of some cancers. This is Protein LDOC1 (LDOC1) from Homo sapiens (Human).